The primary structure comprises 1269 residues: Clustered mitochondria protein homolog (1269 aa).

Residues 297 to 552 form the Clu domain; the sequence is PSNNGDFMRT…NTNPVDIEFV (256 aa). The segment covering 958–969 has biased composition (basic and acidic residues); the sequence is EKKKEESKKAAA. Residues 958–989 are disordered; that stretch reads EKKKEESKKAAADGEDAGSSGATSKEEEQAKE. TPR repeat units lie at residues 1020 to 1053 and 1147 to 1180; these read VSSY…SERC and GQNE…FSKE. The disordered stretch occupies residues 1211 to 1269; the sequence is LASAQQATKPANISQKKGKKSSSSSPALTNKSVDELLQFIEGPGASKSSKKSKKKHTKN. Positions 1213–1223 are enriched in polar residues; the sequence is SAQQATKPANI. Over residues 1258-1269 the composition is skewed to basic residues; it reads SSKKSKKKHTKN.

This sequence belongs to the CLU family. May associate with the eukaryotic translation initiation factor 3 (eIF-3) complex.

It localises to the cytoplasm. In terms of biological role, mRNA-binding protein involved in proper cytoplasmic distribution of mitochondria. In Kluyveromyces lactis (strain ATCC 8585 / CBS 2359 / DSM 70799 / NBRC 1267 / NRRL Y-1140 / WM37) (Yeast), this protein is Clustered mitochondria protein homolog.